A 421-amino-acid chain; its full sequence is U-box domain-containing protein 26 (421 aa).

A U-box domain is found at 13 to 87 (QIPYHFRCPI…QEWCVANRSN (75 aa)).

It catalyses the reaction S-ubiquitinyl-[E2 ubiquitin-conjugating enzyme]-L-cysteine + [acceptor protein]-L-lysine = [E2 ubiquitin-conjugating enzyme]-L-cysteine + N(6)-ubiquitinyl-[acceptor protein]-L-lysine.. It participates in protein modification; protein ubiquitination. Its function is as follows. Functions as an E3 ubiquitin ligase. The polypeptide is U-box domain-containing protein 26 (PUB26) (Arabidopsis thaliana (Mouse-ear cress)).